The chain runs to 262 residues: MQVDADLRPILGPQLVRLDPMRVKQLQDPIVYEAIDNLAKLSAHCLQLRTPLTTCEKLINSDSTLYLSWKYDEEEKVSRLMGFAKVGRKKLFLYDSQMQTYEGEILCLLDFYVHFSCQRQGVGQQILDYMFSQEHTEPYQLALDNPSVTLLGFMSQKYGLIKPVWQNTNFVVFEELFLALSAENGIEKPPPDGWRRPMTPRRLGTGMTDTRWLQHAVSGHQSKGNAMAAPVDADMTPQGALSNRAHQAKARKAHILSSKPLW.

The N-acetyltransferase domain occupies 1–177; it reads MQVDADLRPI…TNFVVFEELF (177 aa). 111–124 serves as a coordination point for acetyl-CoA; it reads FYVHFSCQRQGVGQ.

The protein belongs to the acetyltransferase ATAT1 family. As to expression, expressed solely in touch receptor neurons.

The catalysed reaction is L-lysyl-[alpha-tubulin] + acetyl-CoA = N(6)-acetyl-L-lysyl-[alpha-tubulin] + CoA + H(+). Specifically acetylates 'Lys-40' in alpha-tubulin/mec-12 on the lumenal side of microtubules. Promotes microtubule destabilization and accelerates microtubule dynamics; this activity may be independent of acetylation activity. Acetylates alpha-tubulin with a slow enzymatic rate, due to a catalytic site that is not optimized for acetyl transfer. Enters the microtubule through each end and diffuses quickly throughout the lumen of microtubules. Acetylates only long/old microtubules because of its slow acetylation rate since it does not have time to act on dynamically unstable microtubules before the enzyme is released. Required for the maintenance of touch receptor neurons and possibly other type of neurons involved in locomotion. Regulates the number and localization of mitochondria in mechanosensory neurons. Plays a role in axonal transport. In Caenorhabditis elegans, this protein is Alpha-tubulin N-acetyltransferase 1.